We begin with the raw amino-acid sequence, 225 residues long: MDVVFALGGSVLMPKEGASTENIQNYAKAFKKLKEMGHRVSVVVGGGNTARQYISVAREFANESFCDEIGILATRMNSMLLISALGKDAVKQVPENFKDAEIILNMDKILVMGGTHPAHTTDAVSATLAEFIDADLLVIATNVDGVYNKDPRCNENAVKLDKINTKELLEITGSSSMSAGSSGVVDPLASKIIDRAKLKTIVVKGIPEEILASVTGNHNGTTITP.

9–10 is an ATP binding site; it reads GS. A UMP-binding site is contributed by Gly-46. Residues Gly-47 and Arg-51 each contribute to the ATP site. UMP contacts are provided by residues Asp-67 and 115-121; that span reads THPAHTT. ATP-binding residues include Thr-141, Asn-142, Tyr-147, and Asp-150.

Belongs to the UMP kinase family. In terms of assembly, homohexamer.

It is found in the cytoplasm. It catalyses the reaction UMP + ATP = UDP + ADP. It functions in the pathway pyrimidine metabolism; CTP biosynthesis via de novo pathway; UDP from UMP (UMPK route): step 1/1. With respect to regulation, inhibited by UTP. Catalyzes the reversible phosphorylation of UMP to UDP. The sequence is that of Uridylate kinase from Methanococcus maripaludis (strain DSM 14266 / JCM 13030 / NBRC 101832 / S2 / LL).